The chain runs to 57 residues: High-potential iron-sulfur protein (57 aa).

Residues C21, C24, C33, and C46 each coordinate [4Fe-4S] cluster.

Belongs to the high-potential iron-sulfur protein (HiPIP) family. Homodimer.

Functionally, specific class of high-redox-potential 4Fe-4S ferredoxins. Functions in anaerobic electron transport in most purple and in some other photosynthetic bacteria and in at least one genus (Paracoccus) of halophilic, denitrifying bacteria. The polypeptide is High-potential iron-sulfur protein (hip) (Rhodopila globiformis (Rhodopseudomonas globiformis)).